We begin with the raw amino-acid sequence, 83 residues long: U5-theraphotoxin-Hs1a 5 (83 aa).

The first 21 residues, Met-1–Ala-21, serve as a signal peptide directing secretion. The propeptide occupies Ser-22 to Arg-49. Cystine bridges form between Cys-51–Cys-63, Cys-56–Cys-68, and Cys-62–Cys-75.

It belongs to the neurotoxin 10 (Hwtx-1) family. 51 (Hntx-8) subfamily. Hntx-8 sub-subfamily. In terms of tissue distribution, expressed by the venom gland.

The protein resides in the secreted. Agglutinates erythrocytes. The protein is U5-theraphotoxin-Hs1a 5 of Cyriopagopus schmidti (Chinese bird spider).